We begin with the raw amino-acid sequence, 463 residues long: MSKLWGGRFTEEAEAWVEEFGASISFDQQLVNQDINGSIAHVTMLAKQGIVTKEEAEKIKIGLQYLLEEAKQNKLHFSVEAEDIHLNIEKMLIEKIGEVGGKLHTGRSRNDQVATDMHLYLNEKVEHIIKATKQLQTVLVHQAENNIETIMPGYTHLQRAQPISFAHHILAYFWMLERDVNRYEDSLKRINISPLGAGALAGTTFPIDREYSAELLGFNGIYENSLDAVSDRDFILEFLSNSSMLMMHLSRFCEELILWSSQEFQFIEMSDQYATGSSIMPQKKNPDMAELIRGKTGRVYGNLFSLLTVMKGLPLAYNKDLQEDKEGMFDTVKTVEGCLHIMAGMLETMTVNKEKMGQAVTQDFSNATEIADYLANKGLPFRQAHEIVGKLVLHCTQKGIYLVDVPLETYKEMSSLFEEDLYEVLSPYAAVKRRNSAGGTGFEQIEKALEKAKGLVGEFVGIK.

It belongs to the lyase 1 family. Argininosuccinate lyase subfamily.

The protein localises to the cytoplasm. The catalysed reaction is 2-(N(omega)-L-arginino)succinate = fumarate + L-arginine. The protein operates within amino-acid biosynthesis; L-arginine biosynthesis; L-arginine from L-ornithine and carbamoyl phosphate: step 3/3. This is Argininosuccinate lyase from Bacillus cereus (strain AH187).